A 484-amino-acid chain; its full sequence is Glutamate--tRNA ligase (484 aa).

The short motif at 11–21 (PSPTGYLHIGN) is the 'HIGH' region element. A 'KMSKS' region motif is present at residues 252–256 (KLSKR). K255 is a binding site for ATP.

This sequence belongs to the class-I aminoacyl-tRNA synthetase family. Glutamate--tRNA ligase type 1 subfamily. As to quaternary structure, monomer.

The protein resides in the cytoplasm. The catalysed reaction is tRNA(Glu) + L-glutamate + ATP = L-glutamyl-tRNA(Glu) + AMP + diphosphate. In terms of biological role, catalyzes the attachment of glutamate to tRNA(Glu) in a two-step reaction: glutamate is first activated by ATP to form Glu-AMP and then transferred to the acceptor end of tRNA(Glu). The protein is Glutamate--tRNA ligase of Staphylococcus haemolyticus (strain JCSC1435).